The following is a 583-amino-acid chain: MTNRNIFYATTLVDELARAGLRFVCLAPGSRNTPLVLACARHPAIKVFSHLDERSAAFFALGLALATDTPAAVVCTSGSAAANFFPAIVEAHQAGVPLLALTADRPHELRDSGANQTIDQVKMFGGFVRWSVDLALPEATPPPVVVRSLRTLAARAMAIAGGEPPGVVHLNLPFRPPLEPTPVAGDITAPPDAAQPRQAGAPYTYCLTATRSGVPEAVIEQIASLLQQHERGLIVCGPRCPSGEFGALVSELADRTGYPALVDGVSGIRFGYPGVIGGYETFLFGEHSFPPPDVVVRFGAVPTSKWLNQYLDTAAPSAVIHVRAGGVWADDSHRVSHFIAADESAFIRALLPHLKERRGAWIQMFEEAEAQVWSAVEAALNDEPYFDGAAVYDAVSLLPEGAALFVGNSLPVRHLDQFGKPGARRIHAFANRGASGIDGNISTALGVGAGRPDTPMAAIVGDITFYHDMNGLLAVRRCGVPITIVLLNNDGGGIFHRLPINRFEPEFTDYFVTPHGLHFAHAAKMYGLDYVQVRDREAFRRAFRESIEARAATIIELRTDARADLARRPALMRSAKASDVRGL.

Belongs to the TPP enzyme family. MenD subfamily. As to quaternary structure, homodimer. Mg(2+) serves as cofactor. It depends on Mn(2+) as a cofactor. Thiamine diphosphate is required as a cofactor.

The enzyme catalyses isochorismate + 2-oxoglutarate + H(+) = 5-enolpyruvoyl-6-hydroxy-2-succinyl-cyclohex-3-ene-1-carboxylate + CO2. Its pathway is quinol/quinone metabolism; 1,4-dihydroxy-2-naphthoate biosynthesis; 1,4-dihydroxy-2-naphthoate from chorismate: step 2/7. It functions in the pathway quinol/quinone metabolism; menaquinone biosynthesis. Catalyzes the thiamine diphosphate-dependent decarboxylation of 2-oxoglutarate and the subsequent addition of the resulting succinic semialdehyde-thiamine pyrophosphate anion to isochorismate to yield 2-succinyl-5-enolpyruvyl-6-hydroxy-3-cyclohexene-1-carboxylate (SEPHCHC). This chain is 2-succinyl-5-enolpyruvyl-6-hydroxy-3-cyclohexene-1-carboxylate synthase, found in Roseiflexus sp. (strain RS-1).